A 381-amino-acid polypeptide reads, in one-letter code: Erythronate-4-phosphate dehydrogenase (381 aa).

2 residues coordinate substrate: Ser-45 and Thr-67. NAD(+)-binding positions include Asp-148, 207-209 (ASR), and Asp-233. The active site involves Arg-209. Glu-238 is a catalytic residue. His-255 serves as the catalytic Proton donor. NAD(+) is bound at residue Gly-258.

Belongs to the D-isomer specific 2-hydroxyacid dehydrogenase family. PdxB subfamily. In terms of assembly, homodimer.

The protein resides in the cytoplasm. The enzyme catalyses 4-phospho-D-erythronate + NAD(+) = (R)-3-hydroxy-2-oxo-4-phosphooxybutanoate + NADH + H(+). Its pathway is cofactor biosynthesis; pyridoxine 5'-phosphate biosynthesis; pyridoxine 5'-phosphate from D-erythrose 4-phosphate: step 2/5. In terms of biological role, catalyzes the oxidation of erythronate-4-phosphate to 3-hydroxy-2-oxo-4-phosphonooxybutanoate. The polypeptide is Erythronate-4-phosphate dehydrogenase (Idiomarina loihiensis (strain ATCC BAA-735 / DSM 15497 / L2-TR)).